Consider the following 513-residue polypeptide: Ribonuclease Y (513 aa).

Residues 6 to 26 (YIIIAVVIIIICVILGLYVVD) form a helical membrane-spanning segment. The KH domain occupies 203–288 (TVHVVNLPND…EMVEKAKKEV (86 aa)). The HD domain occupies 329–422 (VLKHSIEVSH…VQAADAISAA (94 aa)).

The protein belongs to the RNase Y family.

It is found in the cell membrane. Its function is as follows. Endoribonuclease that initiates mRNA decay. The protein is Ribonuclease Y of Clostridium botulinum (strain Loch Maree / Type A3).